The sequence spans 140 residues: MEGRLPYDDFPVVFLPPYESPPAWVPPHERVYHPDYNNELTQFLPRTVVLKKPPGAQLGFNIRGGKASQLGIFISKVIPDSDAHRAGLQEGDQVLSVNDVDFQDIEHSKAVEILKTAREITMRVRYFPYSKCLLAPNLVT.

One can recognise a PDZ domain in the interval 47–129 (TVVLKKPPGA…ITMRVRYFPY (83 aa)).

The protein resides in the cytoplasm. The chain is PDZ domain-containing protein 11 (PDZD11) from Gallus gallus (Chicken).